The following is a 354-amino-acid chain: Isopentenyl-diphosphate delta-isomerase (354 aa).

Residue 11–12 (KK) participates in substrate binding. Residues S67, 68-70 (SMT), S98, and N126 contribute to the FMN site. Residue 98–100 (SFK) coordinates substrate. Position 160 (Q160) interacts with substrate. E161 contacts Mg(2+). FMN-binding positions include K192, T222, and 289 to 290 (AA).

It belongs to the IPP isomerase type 2 family. In terms of assembly, homooctamer. Dimer of tetramers. Requires FMN as cofactor. The cofactor is NADPH. Mg(2+) is required as a cofactor.

The protein localises to the cytoplasm. It catalyses the reaction isopentenyl diphosphate = dimethylallyl diphosphate. Functionally, involved in the biosynthesis of isoprenoids. Catalyzes the 1,3-allylic rearrangement of the homoallylic substrate isopentenyl (IPP) to its allylic isomer, dimethylallyl diphosphate (DMAPP). In Borrelia garinii subsp. bavariensis (strain ATCC BAA-2496 / DSM 23469 / PBi) (Borreliella bavariensis), this protein is Isopentenyl-diphosphate delta-isomerase.